The sequence spans 600 residues: Proton channel OTOP1 (600 aa).

The interval 1-50 (MPGDRGALSSPAASSGSPSAAPSGIAACPPPPSPLARASPQASGPRRGAS) is disordered. Residues 1–56 (MPGDRGALSSPAASSGSPSAAPSGIAACPPPPSPLARASPQASGPRRGASVPQKLA) lie on the Cytoplasmic side of the membrane. The segment covering 7–27 (ALSSPAASSGSPSAAPSGIAA) has biased composition (low complexity). A helical membrane pass occupies residues 57–78 (ETLSSQYGLNVFVAGLLFLLAW). The Extracellular segment spans residues 79–86 (AVHATGVG). Residues 87–110 (KSDLLCVLTALMLLQLLWMLWYVG) traverse the membrane as a helical segment. Residues 111–128 (RSYMQRRLIRPKDTHAGA) lie on the Cytoplasmic side of the membrane. Residues 129 to 151 (RWLRGSITLFAFITIVLGCLKVA) traverse the membrane as a helical segment. Over 152-161 (YFIGFSECLS) the chain is Extracellular. A helical transmembrane segment spans residues 162-186 (ATEGVFPVTHAVHTLLQVYFLWGHA). Residues 187 to 194 (KDIIMSFK) lie on the Cytoplasmic side of the membrane. Residues 195–221 (TLERFGVIHSVFTNLLLWANSVLNESK) form a helical membrane-spanning segment. The Extracellular portion of the chain corresponds to 222–262 (HQLNEHKERLITLGFGNITIVLDDHTPQCNCTPPALCSALS). Residues 263 to 288 (HGIYYLYPFNIEYQILASTMLYVLWK) traverse the membrane as a helical segment. Over 289-309 (NIGRRVDSSRHQKMQCRFDGV) the chain is Cytoplasmic. A helical transmembrane segment spans residues 310–332 (LVGSVLGLTVLAATIAVVVVYMI). Residues 333 to 342 (HIGRSKSKSE) lie on the Extracellular side of the membrane. The helical transmembrane segment at 343-368 (SALIMFYLYAITVLLLMGAAGLVGSW) threads the bilayer. Topologically, residues 369-386 (IYRVDEKSLDESKNPARK) are cytoplasmic. The helical transmembrane segment at 387-411 (LDADLLVATASGSWLLSWGSILAIA) threads the bilayer. Residues 412-421 (CAETRPPYTW) are Extracellular-facing. The helical transmembrane segment at 422–442 (YNLPYSVLVIVEKYVQNIFII) threads the bilayer. At 443–532 (ESVHLEPEGV…QGGMKRRLLR (90 aa)) the chain is on the cytoplasmic side. A helical membrane pass occupies residues 533-551 (NITAFLFLCNISLWIPPAF). Over 552–569 (GCRPEYDNGLEEIVFGFE) the chain is Extracellular. A helical membrane pass occupies residues 570–593 (PWIIVVNLAMPFSIFYRMHAAAAL). Topologically, residues 594–600 (FEVYCKI) are cytoplasmic.

This sequence belongs to the otopetrin family. In terms of assembly, homodimer. Interacts with STAT1, independently of STAT1 phosphorylation status.

The protein localises to the cell membrane. It localises to the cell projection. Its subcellular location is the microvillus. It catalyses the reaction H(+)(in) = H(+)(out). Its activity is regulated as follows. Activated by both acid and alkali, with proton influx in response to extracellular acid and proton efflux during alkali stimulation. Inhibited by Zn(2+); this inhibition is thought to be pH-sensitive. Currents evoked in response to mild acid (pH 6.0) stimulus may also be mildly potentiated by exposure to Zn(2+). Activated by NH(4)Cl. Functionally, proton-selective ion channel. Biphasically modulated by acid and alkali, mediating proton influx and efflux in response to extracellular acid and base stimulation, respectively. Sour taste receptor, which carries inward currents in response to extracellular acidification. Sensor for ammonium chloride (NH(4)Cl) in taste receptor cells. NH(4)Cl acts by increasing the intracellular pH, thereby generating a driving force for proton entry through OTOP1 channel. Might also participate in alkaline sensation. Plays a role in the regulation of Ca(2+) flux in response to purigenic (ATP, ADP and UDP) stimuli, leading to increase in cytosolic Ca(2+) due to influx of extracellular calcium. May play this role by inhibiting P2Y purinoceptor-mediated Ca(2+) release in a Ca(2+)-dependent manner and promote an influx of Ca(2+) in response to ATP. Through this mechanism and possibly others, plays a role in the formation and function of calcium carbonate-based structures in the vestibular system of the inner ear, called otoconia, that sense gravity and linear acceleration. In obesity, may attenuate adipose tissue inflammation, through the negative regulation of IFNG signaling, hence may play an adaptive role in the maintainance of metabolic homeostasis. Following alkali activation, may also be permeable Na(+), K(+), Cs(+) and Li(+). In Rattus norvegicus (Rat), this protein is Proton channel OTOP1.